Here is a 122-residue protein sequence, read N- to C-terminus: Large ribosomal subunit protein uL14 (122 aa).

Belongs to the universal ribosomal protein uL14 family. In terms of assembly, part of the 50S ribosomal subunit. Forms a cluster with proteins L3 and L19. In the 70S ribosome, L14 and L19 interact and together make contacts with the 16S rRNA in bridges B5 and B8.

Functionally, binds to 23S rRNA. Forms part of two intersubunit bridges in the 70S ribosome. The polypeptide is Large ribosomal subunit protein uL14 (Thioalkalivibrio sulfidiphilus (strain HL-EbGR7)).